Here is a 340-residue protein sequence, read N- to C-terminus: Phospho-N-acetylmuramoyl-pentapeptide-transferase (340 aa).

10 consecutive transmembrane segments (helical) span residues 5-25 (FILS…HLIN), 50-70 (TPTM…IIWT), 73-93 (SNPY…IGFI), 113-133 (FSLL…IIND), 147-167 (IIFN…IGTS), 178-198 (GLAI…SFIS), 218-238 (LTII…FNTY), 242-262 (IFMG…ISVL), 267-287 (ILLI…IIQV), and 318-338 (IIRF…MLKV).

This sequence belongs to the glycosyltransferase 4 family. MraY subfamily. Mg(2+) serves as cofactor.

It is found in the cell membrane. It carries out the reaction UDP-N-acetyl-alpha-D-muramoyl-L-alanyl-gamma-D-glutamyl-meso-2,6-diaminopimeloyl-D-alanyl-D-alanine + di-trans,octa-cis-undecaprenyl phosphate = di-trans,octa-cis-undecaprenyl diphospho-N-acetyl-alpha-D-muramoyl-L-alanyl-D-glutamyl-meso-2,6-diaminopimeloyl-D-alanyl-D-alanine + UMP. It functions in the pathway cell wall biogenesis; peptidoglycan biosynthesis. Functionally, catalyzes the initial step of the lipid cycle reactions in the biosynthesis of the cell wall peptidoglycan: transfers peptidoglycan precursor phospho-MurNAc-pentapeptide from UDP-MurNAc-pentapeptide onto the lipid carrier undecaprenyl phosphate, yielding undecaprenyl-pyrophosphoryl-MurNAc-pentapeptide, known as lipid I. The protein is Phospho-N-acetylmuramoyl-pentapeptide-transferase of Buchnera aphidicola subsp. Baizongia pistaciae (strain Bp).